The chain runs to 417 residues: Gamma-glutamyl phosphate reductase (417 aa).

This sequence belongs to the gamma-glutamyl phosphate reductase family.

It is found in the cytoplasm. The enzyme catalyses L-glutamate 5-semialdehyde + phosphate + NADP(+) = L-glutamyl 5-phosphate + NADPH + H(+). The protein operates within amino-acid biosynthesis; L-proline biosynthesis; L-glutamate 5-semialdehyde from L-glutamate: step 2/2. In terms of biological role, catalyzes the NADPH-dependent reduction of L-glutamate 5-phosphate into L-glutamate 5-semialdehyde and phosphate. The product spontaneously undergoes cyclization to form 1-pyrroline-5-carboxylate. This chain is Gamma-glutamyl phosphate reductase, found in Escherichia coli O81 (strain ED1a).